A 200-amino-acid chain; its full sequence is MLAFCRSSLKSKKYFIILLALAAIAGLGTHAAWSSNGLPRIDNKTLGRLAQQHPVVVLFRHAERCDRSTNQCLSDKTGITVKGTQDARELGNAFSADIPDFDLYSSNTVRTIQSATWFSAGKKLTVDKRLLQCGNEIYSAIKDLQSKAPDKNIVIFTHNHCLTYIAKDKRDATFKPDYLDGLVMHVEKGKVYLDGEFVNH.

The first 25 residues, 1-25, serve as a signal peptide directing secretion; that stretch reads MLAFCRSSLKSKKYFIILLALAAIA.

It belongs to the phosphoglycerate mutase family. Ais subfamily.

It localises to the periplasm. It functions in the pathway bacterial outer membrane biogenesis; lipopolysaccharide metabolism. In terms of biological role, catalyzes the dephosphorylation of heptose(II) of the outer membrane lipopolysaccharide core. This chain is Lipopolysaccharide core heptose(II)-phosphate phosphatase, found in Escherichia coli O157:H7.